The following is a 63-amino-acid chain: Megourin-1 (63 aa).

As to quaternary structure, monomer. In terms of processing, contains four disulfide bonds.

It localises to the secreted. Has antimicrobial activity against Gram-positive bacteria and fungi. In Megoura viciae (Vetch aphid), this protein is Megourin-1.